Here is a 314-residue protein sequence, read N- to C-terminus: Glucocorticoid receptor (314 aa).

The tract at residues 1 to 44 is disordered; sequence ASAAVSAAPTEKEFPKTHSDVSSEQQNLKGQKGSNGGSMKLHTT. Residues 1 to 281 form a modulating region; sequence ASAAVSAAPT…SAATGPPPKL (281 aa). The segment covering 10–21 has biased composition (basic and acidic residues); the sequence is TEKEFPKTHSDV. Phosphoserine occurs at positions 65, 73, and 88. Residue K120 forms a Glycyl lysine isopeptide (Lys-Gly) (interchain with G-Cter in SUMO2) linkage. S129 carries the phosphoserine modification. Residues K139 and K155 each participate in a glycyl lysine isopeptide (Lys-Gly) (interchain with G-Cter in SUMO); alternate cross-link. Residues K139 and K155 each participate in a glycyl lysine isopeptide (Lys-Gly) (interchain with G-Cter in SUMO2); alternate cross-link. S266 bears the Phosphoserine mark. A Glycyl lysine isopeptide (Lys-Gly) (interchain with G-Cter in ubiquitin) cross-link involves residue K280. An NR C4-type zinc finger spans residues 282 to 314; sequence CLVCSDEASGCHYGVLTCGSCKVFFKRAVEGQH. Positions 282-314 form a DNA-binding region, nuclear receptor; the sequence is CLVCSDEASGCHYGVLTCGSCKVFFKRAVEGQH.

This sequence belongs to the nuclear hormone receptor family. NR3 subfamily. As to quaternary structure, heteromultimeric cytoplasmic complex with HSP90AA1, HSPA1A/HSPA1B, and FKBP5 or another immunophilin such as PPID, STIP1, or the immunophilin homolog PPP5C. Upon ligand binding FKBP5 dissociates from the complex and FKBP4 takes its place, thereby linking the complex to dynein and mediating transport to the nucleus, where the complex dissociates. Probably forms a complex composed of chaperones HSP90 and HSP70, co-chaperones CDC37, PPP5C, TSC1 and client protein TSC2, CDK4, AKT, RAF1 and NR3C1; this complex does not contain co-chaperones STIP1/HOP and PTGES3/p23. Directly interacts with UNC45A. Binds to DNA as a homodimer, and as heterodimer with NR3C2 or the retinoid X receptor. Binds STAT5A and STAT5B homodimers and heterodimers. Interacts with NRIP1, POU2F1, POU2F2 and TRIM28. Interacts with several coactivator complexes, including the SMARCA4 complex, CREBBP/EP300, TADA2L (Ada complex) and p160 coactivators such as NCOA2 and NCOA6. Interaction with BAG1 inhibits transactivation. Interacts with HEXIM1 and TGFB1I1. Interacts with NCOA1. Interacts with NCOA3, SMARCA4, SMARCC1, SMARCD1, and SMARCE1. Interacts with CLOCK, CRY1 and CRY2 in a ligand-dependent fashion. Interacts with CIART. Interacts with RWDD3. Interacts with UBE2I/UBC9 and this interaction is enhanced in the presence of RWDD3. Interacts with GRIP1. Interacts with NR4A3 (via nuclear receptor DNA-binding domain), represses transcription activity of NR4A3 on the POMC promoter Nur response element (NurRE). Directly interacts with PNRC2 to attract and form a complex with UPF1 and DCP1A; the interaction leads to rapid mRNA degradation. Interacts with GSK3B. Interacts with FNIP1 and FNIP2. Interacts (via C-terminus) with HNRNPU (via C-terminus). Interacts with MCM3AP. Interacts (via domain NR LBD) with HSP90AA1 and HSP90AB1. In the absence of hormonal ligand, interacts with TACC1. Interacts (via NR LBD domain) with ZNF764 (via KRAB domain); the interaction regulates transcription factor activity of NR3C1 by directing its actions toward certain biologic pathways. Post-translationally, acetylation by CLOCK reduces its binding to glucocorticoid response elements and its transcriptional activity. In terms of processing, increased proteasome-mediated degradation in response to glucocorticoids. Phosphorylated in the absence of hormone; becomes hyperphosphorylated in the presence of glucocorticoid. The Ser-65, Ser-88 and Ser-266-phosphorylated forms are mainly cytoplasmic, and the Ser-73-phosphorylated form is nuclear. Phosphorylation at Ser-73 increases transcriptional activity. Phosphorylation at Ser-65, Ser-88 and Ser-266 decreases signaling capacity. Phosphorylation at Ser-266 may protect from glucocorticoid-induced apoptosis. Phosphorylation at Ser-65 and Ser-73 is not required in regulation of chromosome segregation. May be dephosphorylated by PPP5C, attenuates NR3C1 action. Post-translationally, ubiquitinated by UBR5, leading to its degradation: UBR5 specifically recognizes and binds ligand-bound NR3C1 when it is not associated with coactivators (NCOAs). In presence of NCOAs, the UBR5-degron is not accessible, preventing its ubiquitination and degradation. In terms of processing, sumoylation at Lys-139 and Lys-155 negatively regulates its transcriptional activity. Heat shock increases sumoylation in a RWDD3-dependent manner.

It localises to the cytoplasm. It is found in the nucleus. The protein localises to the mitochondrion. The protein resides in the cytoskeleton. Its subcellular location is the spindle. It localises to the microtubule organizing center. It is found in the centrosome. The protein localises to the chromosome. The protein resides in the nucleoplasm. Functionally, receptor for glucocorticoids (GC). Has a dual mode of action: as a transcription factor that binds to glucocorticoid response elements (GRE), both for nuclear and mitochondrial DNA, and as a modulator of other transcription factors. Affects inflammatory responses, cellular proliferation and differentiation in target tissues. Involved in chromatin remodeling. Plays a role in rapid mRNA degradation by binding to the 5' UTR of target mRNAs and interacting with PNRC2 in a ligand-dependent manner which recruits the RNA helicase UPF1 and the mRNA-decapping enzyme DCP1A, leading to RNA decay. Could act as a coactivator for STAT5-dependent transcription upon growth hormone (GH) stimulation and could reveal an essential role of hepatic GR in the control of body growth. Mediates glucocorticoid-induced apoptosis. Promotes accurate chromosome segregation during mitosis. May act as a tumor suppressor. May play a negative role in adipogenesis through the regulation of lipolytic and antilipogenic gene expression. The protein is Glucocorticoid receptor (NR3C1) of Ovis aries (Sheep).